Consider the following 736-residue polypeptide: DNA ligase (736 aa).

Residues 41–45 (DQEYD), 91–92 (SL), and glutamate 125 each bind NAD(+). Lysine 127 functions as the N6-AMP-lysine intermediate in the catalytic mechanism. Position 148 (arginine 148) interacts with NAD(+). The disordered stretch occupies residues 170–205 (ELTPLPLAGGAGGGPLDDSGSAPTPDPSRRREGKWN). NAD(+)-binding residues include glutamate 215, lysine 347, and lysine 371. Zn(2+)-binding residues include cysteine 463, cysteine 466, cysteine 481, and cysteine 487. Residues 656–736 (TLDSPVAGKT…GWAEIVAAAG (81 aa)) enclose the BRCT domain.

This sequence belongs to the NAD-dependent DNA ligase family. LigA subfamily. Mg(2+) is required as a cofactor. Mn(2+) serves as cofactor.

It carries out the reaction NAD(+) + (deoxyribonucleotide)n-3'-hydroxyl + 5'-phospho-(deoxyribonucleotide)m = (deoxyribonucleotide)n+m + AMP + beta-nicotinamide D-nucleotide.. DNA ligase that catalyzes the formation of phosphodiester linkages between 5'-phosphoryl and 3'-hydroxyl groups in double-stranded DNA using NAD as a coenzyme and as the energy source for the reaction. It is essential for DNA replication and repair of damaged DNA. The protein is DNA ligase of Erythrobacter litoralis (strain HTCC2594).